Here is a 221-residue protein sequence, read N- to C-terminus: Epididymal secretory glutathione peroxidase (221 aa).

The signal sequence occupies residues 1–21 (MTTQLRVVHLLPLLLACFVQT). Cys73 is a catalytic residue.

It belongs to the glutathione peroxidase family. As to expression, epididymis.

It is found in the secreted. The catalysed reaction is 2 glutathione + H2O2 = glutathione disulfide + 2 H2O. In terms of biological role, protects cells and enzymes from oxidative damage, by catalyzing the reduction of hydrogen peroxide, lipid peroxides and organic hydroperoxide, by glutathione. May constitute a glutathione peroxidase-like protective system against peroxide damage in sperm membrane lipids. The protein is Epididymal secretory glutathione peroxidase (GPX5) of Macaca fascicularis (Crab-eating macaque).